Consider the following 301-residue polypeptide: 2-dehydropantoate 2-reductase (301 aa).

NADP(+)-binding positions include 7–12 (GAGAIG), Lys74, Asn99, and Ala123. Lys179 functions as the Proton donor in the catalytic mechanism. Substrate-binding positions include Lys179, Asn183, Asn187, Asn197, and 246–249 (NYNS). Glu261 contributes to the NADP(+) binding site.

The protein belongs to the ketopantoate reductase family.

The protein localises to the cytoplasm. It carries out the reaction (R)-pantoate + NAD(+) = 2-dehydropantoate + NADH + H(+). It catalyses the reaction (R)-pantoate + NADP(+) = 2-dehydropantoate + NADPH + H(+). The protein operates within cofactor biosynthesis; coenzyme A biosynthesis. In terms of biological role, catalyzes the NAD(P)H-dependent reduction of ketopantoate into pantoic acid. This is 2-dehydropantoate 2-reductase from Pyrococcus horikoshii (strain ATCC 700860 / DSM 12428 / JCM 9974 / NBRC 100139 / OT-3).